We begin with the raw amino-acid sequence, 261 residues long: Cytochrome c oxidase subunit 3 (261 aa).

The Mitochondrial matrix segment spans residues Met-1–Pro-15. Residues Trp-16–Trp-34 form a helical membrane-spanning segment. Topologically, residues Phe-35–Thr-40 are mitochondrial intermembrane. Residues Thr-41–Thr-66 form a helical membrane-spanning segment. The Mitochondrial matrix segment spans residues Tyr-67–Thr-72. Residues Pro-73–Ser-105 form a helical membrane-spanning segment. Residues Leu-106–Glu-128 are Mitochondrial intermembrane-facing. The helical transmembrane segment at Val-129–Met-152 threads the bilayer. At Glu-153 to Asn-155 the chain is on the mitochondrial matrix side. The chain crosses the membrane as a helical span at residues Arg-156 to Glu-183. Over Ser-184 to Asp-190 the chain is Mitochondrial intermembrane. The helical transmembrane segment at Gly-191 to Leu-223 threads the bilayer. The Mitochondrial matrix segment spans residues Met-224 to His-232. Residues Phe-233–Ile-256 form a helical membrane-spanning segment. Over Tyr-257–Ser-261 the chain is Mitochondrial intermembrane.

The protein belongs to the cytochrome c oxidase subunit 3 family. As to quaternary structure, component of the cytochrome c oxidase (complex IV, CIV), a multisubunit enzyme composed of 14 subunits. The complex is composed of a catalytic core of 3 subunits MT-CO1, MT-CO2 and MT-CO3, encoded in the mitochondrial DNA, and 11 supernumerary subunits COX4I, COX5A, COX5B, COX6A, COX6B, COX6C, COX7A, COX7B, COX7C, COX8 and NDUFA4, which are encoded in the nuclear genome. The complex exists as a monomer or a dimer and forms supercomplexes (SCs) in the inner mitochondrial membrane with NADH-ubiquinone oxidoreductase (complex I, CI) and ubiquinol-cytochrome c oxidoreductase (cytochrome b-c1 complex, complex III, CIII), resulting in different assemblies (supercomplex SCI(1)III(2)IV(1) and megacomplex MCI(2)III(2)IV(2)).

Its subcellular location is the mitochondrion inner membrane. The enzyme catalyses 4 Fe(II)-[cytochrome c] + O2 + 8 H(+)(in) = 4 Fe(III)-[cytochrome c] + 2 H2O + 4 H(+)(out). Its function is as follows. Component of the cytochrome c oxidase, the last enzyme in the mitochondrial electron transport chain which drives oxidative phosphorylation. The respiratory chain contains 3 multisubunit complexes succinate dehydrogenase (complex II, CII), ubiquinol-cytochrome c oxidoreductase (cytochrome b-c1 complex, complex III, CIII) and cytochrome c oxidase (complex IV, CIV), that cooperate to transfer electrons derived from NADH and succinate to molecular oxygen, creating an electrochemical gradient over the inner membrane that drives transmembrane transport and the ATP synthase. Cytochrome c oxidase is the component of the respiratory chain that catalyzes the reduction of oxygen to water. Electrons originating from reduced cytochrome c in the intermembrane space (IMS) are transferred via the dinuclear copper A center (CU(A)) of subunit 2 and heme A of subunit 1 to the active site in subunit 1, a binuclear center (BNC) formed by heme A3 and copper B (CU(B)). The BNC reduces molecular oxygen to 2 water molecules using 4 electrons from cytochrome c in the IMS and 4 protons from the mitochondrial matrix. The sequence is that of Cytochrome c oxidase subunit 3 (MT-CO3) from Pan troglodytes (Chimpanzee).